The following is a 72-amino-acid chain: uncharacterized protein (72 aa).

At 1-12 (MSKHKHEWTESV) the chain is on the cytoplasmic side. The chain crosses the membrane as a helical span at residues 13 to 32 (ANSGPASILSYCASSILMTV). Residues 33–46 (TNKFVVNLDNFNMN) lie on the Lumenal side of the membrane. Residues 47–69 (FVMLFVQSLVCTVTLCILRIVGV) form a helical membrane-spanning segment. The Cytoplasmic portion of the chain corresponds to 70–72 (ANF).

It belongs to the TPT transporter family. SLC35D subfamily.

The protein resides in the membrane. This is an uncharacterized protein from Saccharomyces cerevisiae (strain RM11-1a) (Baker's yeast).